The sequence spans 1047 residues: MTDNIPLQPVRQKKRMDSRPRAGCCEWLRCCGGGEARPRTVWLGHPEKRDQRYPRNVINNQKYNFFTFLPGVLFNQFKYFFNLYFLLLACSQFVPEMRLGALYTYWVPLGFVLAVTVIREAVEEIRCYVRDKEVNSQVYSRLTARGTVKVKSSNIQVGDLIIVEKNQRVPADMIFLRTSEKNGSCFLRTDQLDGETDWKLRLPVACTQRLPTAADLLQIRSYVYAEEPNIDIHNFVGTFTREDSDPPISESLSIENTLWAGTVVASGTVVGVVLYTGRELRSVMNTSNPRSKIGLFDLEVNCLTKILFGALVVVSLVMVALQHFAGRWYLQIIRFLLLFSNIIPISLRVNLDMGKIVYSWVIRRDSKIPGTVVRSSTIPEQLGRISYLLTDKTGTLTQNEMIFKRLHLGTVAYGLDSMDEVQSHIFSIYTQQSQDPPAQKGPTLTTKVRRTMSSRVHEAVKAIALCHNVTPVYESNGVTDQAEAEKQYEDSCRVYQASSPDEVALVQWTESVGLTLVGRDQSSMQLRTPGDQILNFTILQIFPFTYESKRMGIIVRDESTGEITFYMKGADVVMAGIVQYNDWLEEECGNMAREGLRVLVVAKKSLAEEQYQDFEARYVQAKLSVHDRSLKVATVIESLEMEMELLCLTGVEDQLQADVRPTLETLRNAGIKVWMLTGDKLETATCTAKNAHLVTRNQDIHVFRLVTNRGEAHLELNAFRRKHDCALVISGDSLEVCLKYYEYEFMELACQCPAVVCCRCAPTQKAQIVRLLQERTGKLTCAVGDGGNDVSMIQESDCGVGVEGKEGKQASLAADFSITQFKHLGRLLMVHGRNSYKRSAALSQFVIHRSLCISTMQAVFSSVFYFASVPLYQGFLIIGYSTIYTMFPVFSLVLDKDVKSEVAMLYPELYKDLLKGRPLSYKTFLIWVLISIYQGSTIMYGALLLFESEFVHIVAISFTSLILTELLMVALTIQTWHWLMTVAELLSLACYIASLVFLHEFIDVYFIATLSFLWKVSVITLVSCLPLYVLKYLRRRFSPPSYSKLTS.

The residue at position 2 (Thr-2) is an N-acetylthreonine. At 2–69 the chain is on the cytoplasmic side; sequence TDNIPLQPVR…NQKYNFFTFL (68 aa). Residues 70–91 traverse the membrane as a helical segment; sequence PGVLFNQFKYFFNLYFLLLACS. The Extracellular segment spans residues 92–96; it reads QFVPE. The chain crosses the membrane as a helical span at residues 97 to 119; that stretch reads MRLGALYTYWVPLGFVLAVTVIR. At 120 to 303 the chain is on the cytoplasmic side; sequence EAVEEIRCYV…GLFDLEVNCL (184 aa). Residues 304–325 traverse the membrane as a helical segment; it reads TKILFGALVVVSLVMVALQHFA. At 326–332 the chain is on the extracellular side; that stretch reads GRWYLQI. A helical membrane pass occupies residues 333 to 354; that stretch reads IRFLLLFSNIIPISLRVNLDMG. Residues 355 to 841 lie on the Cytoplasmic side of the membrane; that stretch reads KIVYSWVIRR…GRNSYKRSAA (487 aa). Asp-391 serves as the catalytic 4-aspartylphosphate intermediate. Positions 391, 392, 393, 502, 544, 549, 568, 597, 677, 678, 679, 759, and 765 each coordinate ATP. Residue Asp-391 participates in Mg(2+) binding. Residue Thr-393 coordinates Mg(2+). Asp-785 contributes to the Mg(2+) binding site. Residues Asn-788 and Asp-789 each coordinate ATP. Residue Asp-789 participates in Mg(2+) binding. A helical transmembrane segment spans residues 842 to 862; sequence LSQFVIHRSLCISTMQAVFSS. Residues 863 to 874 lie on the Extracellular side of the membrane; the sequence is VFYFASVPLYQG. A helical membrane pass occupies residues 875-893; sequence FLIIGYSTIYTMFPVFSLV. At 894–923 the chain is on the cytoplasmic side; that stretch reads LDKDVKSEVAMLYPELYKDLLKGRPLSYKT. The chain crosses the membrane as a helical span at residues 924–942; the sequence is FLIWVLISIYQGSTIMYGA. The Extracellular segment spans residues 943 to 949; it reads LLLFESE. The helical transmembrane segment at 950 to 972 threads the bilayer; that stretch reads FVHIVAISFTSLILTELLMVALT. Topologically, residues 973-978 are cytoplasmic; it reads IQTWHW. The chain crosses the membrane as a helical span at residues 979-999; it reads LMTVAELLSLACYIASLVFLH. The Extracellular portion of the chain corresponds to 1000–1006; sequence EFIDVYF. Residues 1007–1030 form a helical membrane-spanning segment; that stretch reads IATLSFLWKVSVITLVSCLPLYVL. The Cytoplasmic segment spans residues 1031-1047; the sequence is KYLRRRFSPPSYSKLTS.

It belongs to the cation transport ATPase (P-type) (TC 3.A.3) family. Type IV subfamily. In terms of assembly, heterotrimer with MON2 and DOP1B; this complex regulates SNX3-retromer mediated endosomal sorting of WLS. Interacts with RAB5A and RAB11A. The cofactor is Mg(2+).

The protein resides in the early endosome membrane. It localises to the recycling endosome membrane. The protein localises to the late endosome membrane. Its subcellular location is the golgi apparatus. It is found in the trans-Golgi network membrane. The protein resides in the cell membrane. It catalyses the reaction ATP + H2O + phospholipidSide 1 = ADP + phosphate + phospholipidSide 2.. Its function is as follows. Plays a role in regulating membrane trafficking of cargo proteins, namely endosome to plasma membrane recycling, probably acting through RAB5 and RAB11 activation. Also involved in endosome to trans-Golgi network retrograde transport. In complex with MON2 and DOP1B, regulates SNX3 retromer-mediated endosomal sorting of WLS, a transporter of Wnt morphogens in developing tissues. Participates in the formation of endosomal carriers that direct WLS trafficking back to Golgi, away from lysosomal degradation. Appears to be implicated in intercellular communication by negatively regulating the release of exosomes. The flippase activity towards membrane lipids and its role in membrane asymmetry remains to be proved. Required for the maintenance of neurite morphology and synaptic transmission. This chain is Probable phospholipid-transporting ATPase IIA, found in Homo sapiens (Human).